The following is a 153-amino-acid chain: ATP synthase subunit b' (153 aa).

The helical transmembrane segment at 20–40 (TLPLMAAQVVLLTFILNALFF) threads the bilayer.

It belongs to the ATPase B chain family. As to quaternary structure, F-type ATPases have 2 components, F(1) - the catalytic core - and F(0) - the membrane proton channel. F(1) has five subunits: alpha(3), beta(3), gamma(1), delta(1), epsilon(1). F(0) has four main subunits: a(1), b(1), b'(1) and c(10-14). The alpha and beta chains form an alternating ring which encloses part of the gamma chain. F(1) is attached to F(0) by a central stalk formed by the gamma and epsilon chains, while a peripheral stalk is formed by the delta, b and b' chains.

The protein resides in the cellular thylakoid membrane. Functionally, f(1)F(0) ATP synthase produces ATP from ADP in the presence of a proton or sodium gradient. F-type ATPases consist of two structural domains, F(1) containing the extramembraneous catalytic core and F(0) containing the membrane proton channel, linked together by a central stalk and a peripheral stalk. During catalysis, ATP synthesis in the catalytic domain of F(1) is coupled via a rotary mechanism of the central stalk subunits to proton translocation. In terms of biological role, component of the F(0) channel, it forms part of the peripheral stalk, linking F(1) to F(0). The b'-subunit is a diverged and duplicated form of b found in plants and photosynthetic bacteria. This is ATP synthase subunit b' from Prochlorococcus marinus (strain SARG / CCMP1375 / SS120).